Here is a 210-residue protein sequence, read N- to C-terminus: Ribosomal RNA small subunit methyltransferase G (210 aa).

S-adenosyl-L-methionine contacts are provided by residues Gly75, Phe80, 98–100 (EST), 126–127 (AE), and Arg141.

This sequence belongs to the methyltransferase superfamily. RNA methyltransferase RsmG family.

It is found in the cytoplasm. Specifically methylates the N7 position of a guanine in 16S rRNA. This Solibacter usitatus (strain Ellin6076) protein is Ribosomal RNA small subunit methyltransferase G.